The primary structure comprises 240 residues: Uridylate kinase (240 aa).

12–15 provides a ligand contact to ATP; the sequence is KLSG. Residues 20–25 are involved in allosteric activation by GTP; sequence GEKGFG. Gly54 lines the UMP pocket. ATP is bound by residues Gly55 and Arg59. Residues Asp74 and 135–142 contribute to the UMP site; that span reads TGSPYFST. ATP contacts are provided by Asn163, Tyr169, and Asp172.

Belongs to the UMP kinase family. As to quaternary structure, homohexamer.

It localises to the cytoplasm. The enzyme catalyses UMP + ATP = UDP + ADP. It participates in pyrimidine metabolism; CTP biosynthesis via de novo pathway; UDP from UMP (UMPK route): step 1/1. With respect to regulation, allosterically activated by GTP. Inhibited by UTP. Catalyzes the reversible phosphorylation of UMP to UDP. The polypeptide is Uridylate kinase (Lactiplantibacillus plantarum (strain ATCC BAA-793 / NCIMB 8826 / WCFS1) (Lactobacillus plantarum)).